The sequence spans 184 residues: TATA-box-binding protein (184 aa).

2 consecutive repeat copies span residues 9–85 (IENI…IDKL) and 100–178 (VQNI…KKDL).

This sequence belongs to the TBP family.

Its function is as follows. General factor that plays a role in the activation of archaeal genes transcribed by RNA polymerase. Binds specifically to the TATA box promoter element which lies close to the position of transcription initiation. The protein is TATA-box-binding protein of Picrophilus torridus (strain ATCC 700027 / DSM 9790 / JCM 10055 / NBRC 100828 / KAW 2/3).